The following is a 46-amino-acid chain: GIFSKFGRKKIKNLLISGLKNVGKEVGMDVVRTGIDIAGCKIKGEC.

Cys40 and Cys46 are disulfide-bonded.

In terms of tissue distribution, expressed by the skin glands.

The protein localises to the secreted. Antimicrobial peptide. Stimulates insulin release by BRIN-BD11 cells in vitro. In Pelophylax saharicus (Sahara frog), this protein is Esculentin-1.